A 341-amino-acid polypeptide reads, in one-letter code: Malate dehydrogenase, mitochondrial (341 aa).

NAD(+) is bound by residues G35–G41 and D61. Positions 108 and 114 each coordinate substrate. NAD(+)-binding positions include N121 and I144 to N146. The substrate site is built by N146 and R180. The Proton acceptor role is filled by H204. M255 is a binding site for NAD(+).

Belongs to the LDH/MDH superfamily. MDH type 1 family. As to quaternary structure, homodimer.

It localises to the mitochondrion matrix. It catalyses the reaction (S)-malate + NAD(+) = oxaloacetate + NADH + H(+). In terms of biological role, catalyzes the reversible conversion of (S)-malate to oxaloacetate in the citric acid cycle. The sequence is that of Malate dehydrogenase, mitochondrial from Caenorhabditis elegans.